Reading from the N-terminus, the 93-residue chain is Molybdopterin synthase sulfur carrier subunit (93 aa).

1-thioglycine; alternate is present on glycine 93. Residue glycine 93 is modified to Glycyl adenylate; alternate.

Belongs to the MoaD family. MOCS2A subfamily. In terms of assembly, heterotetramer; composed of 2 small (MOCS2A) and 2 large (MOCS2B) subunits. C-terminal thiocarboxylation occurs in 2 steps, it is first acyl-adenylated (-COAMP) via the hesA/moeB/thiF part of uba4, then thiocarboxylated (-COSH) via the rhodanese domain of uba4.

The protein resides in the cytoplasm. It functions in the pathway cofactor biosynthesis; molybdopterin biosynthesis. In terms of biological role, acts as a sulfur carrier required for molybdopterin biosynthesis. Component of the molybdopterin synthase complex that catalyzes the conversion of precursor Z into molybdopterin by mediating the incorporation of 2 sulfur atoms into precursor Z to generate a dithiolene group. In the complex, serves as sulfur donor by being thiocarboxylated (-COSH) at its C-terminus by uba4. After interaction with MOCS2B, the sulfur is then transferred to precursor Z to form molybdopterin. This chain is Molybdopterin synthase sulfur carrier subunit, found in Pyrenophora tritici-repentis (strain Pt-1C-BFP) (Wheat tan spot fungus).